A 761-amino-acid polypeptide reads, in one-letter code: Phosphoribosylformylglycinamidine synthase subunit PurL (761 aa).

Positions 1–13 (MTSRVDTVDNAAS) are enriched in polar residues. The disordered stretch occupies residues 1–23 (MTSRVDTVDNAASTPDHPQPFAE). His-57 is a catalytic residue. Positions 60 and 104 each coordinate ATP. Glu-106 is a binding site for Mg(2+). Substrate-binding positions include 107–110 (SHNH) and Arg-129. His-108 (proton acceptor) is an active-site residue. Residue Asp-130 participates in Mg(2+) binding. A substrate-binding site is contributed by Gln-259. Residue Asp-287 participates in Mg(2+) binding. Substrate is bound at residue 331 to 333 (ESQ). Positions 519 and 556 each coordinate ATP. Asn-557 serves as a coordination point for Mg(2+). Ser-559 contacts substrate.

It belongs to the FGAMS family. As to quaternary structure, monomer. Part of the FGAM synthase complex composed of 1 PurL, 1 PurQ and 2 PurS subunits.

Its subcellular location is the cytoplasm. The enzyme catalyses N(2)-formyl-N(1)-(5-phospho-beta-D-ribosyl)glycinamide + L-glutamine + ATP + H2O = 2-formamido-N(1)-(5-O-phospho-beta-D-ribosyl)acetamidine + L-glutamate + ADP + phosphate + H(+). The protein operates within purine metabolism; IMP biosynthesis via de novo pathway; 5-amino-1-(5-phospho-D-ribosyl)imidazole from N(2)-formyl-N(1)-(5-phospho-D-ribosyl)glycinamide: step 1/2. Functionally, part of the phosphoribosylformylglycinamidine synthase complex involved in the purines biosynthetic pathway. Catalyzes the ATP-dependent conversion of formylglycinamide ribonucleotide (FGAR) and glutamine to yield formylglycinamidine ribonucleotide (FGAM) and glutamate. The FGAM synthase complex is composed of three subunits. PurQ produces an ammonia molecule by converting glutamine to glutamate. PurL transfers the ammonia molecule to FGAR to form FGAM in an ATP-dependent manner. PurS interacts with PurQ and PurL and is thought to assist in the transfer of the ammonia molecule from PurQ to PurL. The polypeptide is Phosphoribosylformylglycinamidine synthase subunit PurL (Mycobacteroides abscessus (strain ATCC 19977 / DSM 44196 / CCUG 20993 / CIP 104536 / JCM 13569 / NCTC 13031 / TMC 1543 / L948) (Mycobacterium abscessus)).